A 395-amino-acid chain; its full sequence is Levanbiose-producing levanase (395 aa).

The active site involves D1. Substrate-binding positions include 59 to 60 (WT), 124 to 125 (RD), E173, and W261.

The protein belongs to the glycosyl hydrolase 32 family.

It is found in the membrane. It carries out the reaction Hydrolysis of (2-&gt;6)-beta-D-fructofuranan, to remove successive disaccharide residues as levanbiose, i.e. 6-(beta-D-fructofuranosyl)-D-fructose, from the end of the chain.. Its function is as follows. Catalyzes the degradation of levan mainly into levanbiose (difructose). Can also hydrolyze inulin. This chain is Levanbiose-producing levanase (levB), found in Geobacillus stearothermophilus (Bacillus stearothermophilus).